The primary structure comprises 139 residues: Small ribosomal subunit protein uS12 (139 aa).

Positions 1–21 (MPTINQLVRKGRKAVQEKSTA) are disordered. Residue Asp-102 is modified to 3-methylthioaspartic acid.

It belongs to the universal ribosomal protein uS12 family. Part of the 30S ribosomal subunit. Contacts proteins S8 and S17. May interact with IF1 in the 30S initiation complex.

Functionally, with S4 and S5 plays an important role in translational accuracy. Its function is as follows. Interacts with and stabilizes bases of the 16S rRNA that are involved in tRNA selection in the A site and with the mRNA backbone. Located at the interface of the 30S and 50S subunits, it traverses the body of the 30S subunit contacting proteins on the other side and probably holding the rRNA structure together. The combined cluster of proteins S8, S12 and S17 appears to hold together the shoulder and platform of the 30S subunit. This is Small ribosomal subunit protein uS12 from Alkaliphilus metalliredigens (strain QYMF).